Consider the following 173-residue polypeptide: Thiol-disulfide oxidoreductase ResA (173 aa).

The helical; Signal-anchor for type II membrane protein transmembrane segment at 10–29 threads the bilayer; the sequence is VIILLILSGAVGFTLYQGYF. The Thioredoxin domain occupies 35 to 173; that stretch reads MEIGKEAPNF…LEEYLKKITP (139 aa). A disulfide bridge connects residues Cys73 and Cys76.

This sequence belongs to the thioredoxin family. ResA subfamily.

The protein resides in the cell membrane. The protein operates within protein modification; cytochrome c assembly. Functionally, thiol-disulfide oxidoreductase which is required in disulfide reduction during c-type cytochrome synthesis. May accept reducing equivalents from CcdA, leading to breakage of disulfide bonds in apocytochrome c; following this reduction heme can be covalently attached. The chain is Thiol-disulfide oxidoreductase ResA from Bacillus cereus (strain ATCC 10987 / NRS 248).